The chain runs to 200 residues: NAD(P)H dehydrogenase (quinone) (200 aa).

Residues 4 to 191 (VLVLYYSSYG…GGARYQGALV (188 aa)) form the Flavodoxin-like domain. FMN-binding positions include 10 to 15 (SSYGHI) and 79 to 81 (TRF). Tyrosine 12 contributes to the NAD(+) binding site. Tryptophan 99 is a binding site for substrate. Residues 114-120 (STASQHG) and histidine 135 contribute to the FMN site.

The protein belongs to the WrbA family. The cofactor is FMN.

The enzyme catalyses a quinone + NADH + H(+) = a quinol + NAD(+). It carries out the reaction a quinone + NADPH + H(+) = a quinol + NADP(+). In Rhodospirillum centenum (strain ATCC 51521 / SW), this protein is NAD(P)H dehydrogenase (quinone).